A 368-amino-acid polypeptide reads, in one-letter code: Endophilin-A2 (368 aa).

The segment at 1–21 (MSVAGLKKQFYKASQLVSEKV) is membrane-binding amphipathic helix. The 232-residue stretch at 18–249 (SEKVGGAEGT…LKRRMREASS (232 aa)) folds into the BAR domain. Positions 60–87 (PNPASRAKLTMLNTVSKIRGQVKNPGYP) are required for dimerization upon membrane association. Residues 181–250 (EELRQAMEKF…KRRMREASSR (70 aa)) adopt a coiled-coil conformation. The interval 218 to 254 (LVDAQLDYHRQAVQILDELADKLKRRMREASSRPKRE) is interaction with ARC. The disordered stretch occupies residues 243 to 308 (RMREASSRPK…PSRSMPPLDQ (66 aa)). Residues 245–263 (REASSRPKREYKPKPRELL) show a composition bias toward basic and acidic residues. Phosphoserine occurs at positions 288 and 292. Phosphothreonine is present on threonine 298. The region spanning 306 to 365 (LDQPSCKALYDFEPENDGELGFHEGDIITLTNQIDENWYEGMLDGQSGFFPLSYVEVLVP) is the SH3 domain. Tyrosine 315 bears the Phosphotyrosine mark.

The protein belongs to the endophilin family. Interacts with ARC, SYNJ1 and DNM1. Interacts with PDCD6IP. Interacts with BIN2.

Its subcellular location is the cytoplasm. The protein resides in the early endosome membrane. The protein localises to the cell projection. It localises to the podosome. Functionally, implicated in endocytosis. May recruit other proteins to membranes with high curvature. The sequence is that of Endophilin-A2 from Bos taurus (Bovine).